The primary structure comprises 352 residues: Elongation factor Tu, mitochondrial (352 aa).

The 197-residue stretch at 45 to 241 (RPHVNVGTIG…AIDTHIPLPH (197 aa)) folds into the tr-type G domain. A G1 region spans residues 54 to 61 (GHVDHGKT). GTP contacts are provided by Asp57, Gly59, Lys60, Thr61, and Thr62. Residue Thr61 participates in Mg(2+) binding. The segment at 95-99 (GITIN) is G2. The G3 stretch occupies residues 116 to 119 (DCPG). 5 residues coordinate GTP: Asn171, Asp174, Ser209, Ala210, and Leu211. Residues 171-174 (NKAD) form a G4 region. Residues 209 to 211 (SAL) form a G5 region.

Its subcellular location is the mitochondrion. It carries out the reaction GTP + H2O = GDP + phosphate + H(+). Its function is as follows. GTP hydrolase that promotes the GTP-dependent binding of aminoacyl-tRNA to the A-site of ribosomes during protein biosynthesis. The sequence is that of Elongation factor Tu, mitochondrial from Gallus gallus (Chicken).